Consider the following 144-residue polypeptide: Signal recognition particle 19 kDa protein (144 aa).

A disordered region spans residues 117 to 144 (TRTQKTGGGDQSLQQGEGSKKGKGKKKK).

Belongs to the SRP19 family. In terms of assembly, component of a signal recognition particle complex that consists of a 7SL RNA molecule of 300 nucleotides and six protein subunits: SRP72, SRP68, SRP54, SRP19, SRP14 and SRP9. Interacts with IPO5, IPO7, IPO8, KPNB1 and TNPO1. Interactions with IPO8 and TNPO1 may be involved in SRP19 import into the nucleus.

It localises to the cytoplasm. The protein resides in the nucleus. The protein localises to the nucleolus. Its subcellular location is the nucleoplasm. Functionally, component of the signal recognition particle (SRP) complex, a ribonucleoprotein complex that mediates the cotranslational targeting of secretory and membrane proteins to the endoplasmic reticulum (ER). Binds directly to 7SL RNA. Mediates binding of SRP54 to the SRP complex. This Canis lupus familiaris (Dog) protein is Signal recognition particle 19 kDa protein.